Consider the following 202-residue polypeptide: Imidazoleglycerol-phosphate dehydratase (202 aa).

Belongs to the imidazoleglycerol-phosphate dehydratase family.

The protein localises to the cytoplasm. The catalysed reaction is D-erythro-1-(imidazol-4-yl)glycerol 3-phosphate = 3-(imidazol-4-yl)-2-oxopropyl phosphate + H2O. It participates in amino-acid biosynthesis; L-histidine biosynthesis; L-histidine from 5-phospho-alpha-D-ribose 1-diphosphate: step 6/9. The polypeptide is Imidazoleglycerol-phosphate dehydratase (Lactococcus lactis subsp. cremoris (strain SK11)).